Here is a 365-residue protein sequence, read N- to C-terminus: Ribosome biogenesis regulatory protein homolog (365 aa).

Met1 is subject to N-acetylmethionine. A Phosphoserine modification is found at Ser5. Glycyl lysine isopeptide (Lys-Gly) (interchain with G-Cter in SUMO2) cross-links involve residues Lys154 and Lys226. The segment at Gly233 to Lys253 is disordered. The span at Phe235–Pro245 shows a compositional bias: basic and acidic residues. A Glycyl lysine isopeptide (Lys-Gly) (interchain with G-Cter in SUMO2) cross-link involves residue Lys266. Arg273 bears the Citrulline mark. Residues Pro280–Lys365 form a disordered region. Residues Lys302–Gly325 show a composition bias toward basic residues. Gly residues predominate over residues Gly337–Gly350. Basic residues predominate over residues Gly351–Lys365.

Belongs to the RRS1 family. Component of a hexameric 5S RNP precursor complex, composed of 5S RNA, RRS1, RPF2/BXDC1, RPL5, RPL11 and HEATR3; this complex acts as a precursor for ribosome assembly. Citrullinated by PADI4.

The protein resides in the nucleus. Its subcellular location is the nucleolus. Involved in ribosomal large subunit assembly. May regulate the localization of the 5S RNP/5S ribonucleoprotein particle to the nucleolus. This Homo sapiens (Human) protein is Ribosome biogenesis regulatory protein homolog (RRS1).